Here is a 91-residue protein sequence, read N- to C-terminus: Histone H1, sperm (91 aa).

Positions 1–25 (PGSPQKRAASPRKSPRKGSPKKSPM) are disordered. Positions 9–20 (ASPRKSPRKGSP) are enriched in basic residues. The 74-residue stretch at 18–91 (GSPKKSPMIR…TGATGRFRVG (74 aa)) folds into the H15 domain.

The protein belongs to the histone H1/H5 family.

It is found in the nucleus. It localises to the chromosome. Functionally, histones H1 are necessary for the condensation of nucleosome chains into higher-order structures. This Sphaerechinus granularis (Purple sea urchin) protein is Histone H1, sperm.